The primary structure comprises 336 residues: tRNA N6-adenosine threonylcarbamoyltransferase (336 aa).

Fe cation contacts are provided by H111 and H115. Residues 133–137 (LISGG), D166, G179, and N276 each bind substrate. D301 is a Fe cation binding site.

This sequence belongs to the KAE1 / TsaD family. The cofactor is Fe(2+).

It is found in the cytoplasm. The enzyme catalyses L-threonylcarbamoyladenylate + adenosine(37) in tRNA = N(6)-L-threonylcarbamoyladenosine(37) in tRNA + AMP + H(+). Required for the formation of a threonylcarbamoyl group on adenosine at position 37 (t(6)A37) in tRNAs that read codons beginning with adenine. Is involved in the transfer of the threonylcarbamoyl moiety of threonylcarbamoyl-AMP (TC-AMP) to the N6 group of A37, together with TsaE and TsaB. TsaD likely plays a direct catalytic role in this reaction. The protein is tRNA N6-adenosine threonylcarbamoyltransferase of Wolbachia pipientis subsp. Culex pipiens (strain wPip).